Reading from the N-terminus, the 325-residue chain is Oligopeptide transport system permease protein OppB (325 aa).

The next 6 helical transmembrane spans lie at 12–32 (YLVLLALASFLTYCLTSLAFS), 102–122 (LVVGSVFGTVAGVVIGAWGAI), 135–155 (LALLVLSTPTFVVANLLILGA), 189–208 (LQHLILPSLTLALAAAAGFS), 248–268 (IPMATLFAYGVAGLVTGAVFV), and 290–310 (TNIVAAITVFSGAVVLLAGLL). The ABC transmembrane type-1 domain maps to 95 to 311 (IGVSLRLLVV…AVVLLAGLLS (217 aa)).

The protein belongs to the binding-protein-dependent transport system permease family. OppBC subfamily. The complex is composed of an ATP-binding protein (OppD), two transmembrane proteins (OppB and OppC) and a solute-binding protein (OppA).

The protein localises to the cell inner membrane. Functionally, part of the ABC transporter complex OppABCD involved in the uptake of oligopeptides. Responsible for the translocation of the substrate across the membrane. This is Oligopeptide transport system permease protein OppB from Mycobacterium bovis (strain ATCC BAA-935 / AF2122/97).